The primary structure comprises 514 residues: Maturase K (514 aa).

The protein belongs to the intron maturase 2 family. MatK subfamily.

The protein localises to the plastid. It localises to the chloroplast. Usually encoded in the trnK tRNA gene intron. Probably assists in splicing its own and other chloroplast group II introns. The polypeptide is Maturase K (Plantago argentea (Silver plantain)).